A 692-amino-acid chain; its full sequence is Elongation factor G (692 aa).

Residues Gln-8–Leu-283 form the tr-type G domain. GTP contacts are provided by residues Ala-17 to Thr-24, Asp-81 to His-85, and Asn-135 to Asp-138.

Belongs to the TRAFAC class translation factor GTPase superfamily. Classic translation factor GTPase family. EF-G/EF-2 subfamily.

Its subcellular location is the cytoplasm. Functionally, catalyzes the GTP-dependent ribosomal translocation step during translation elongation. During this step, the ribosome changes from the pre-translocational (PRE) to the post-translocational (POST) state as the newly formed A-site-bound peptidyl-tRNA and P-site-bound deacylated tRNA move to the P and E sites, respectively. Catalyzes the coordinated movement of the two tRNA molecules, the mRNA and conformational changes in the ribosome. The chain is Elongation factor G from Hydrogenobaculum sp. (strain Y04AAS1).